The following is a 506-amino-acid chain: Radiation-sensitive protein 28 (506 aa).

WD repeat units follow at residues 55–94, 193–233, 285–325, 357–396, and 404–451; these read PLSI…HRND, HHKY…AVQD, RMQS…RLYS, AHLR…LQPE, and LGTQ…LWNK.

The protein localises to the nucleus. Its function is as follows. Involved in transcription-coupled repair nucleotide excision repair (NER) of UV-induced DNA lesions. This Saccharomyces cerevisiae (strain ATCC 204508 / S288c) (Baker's yeast) protein is Radiation-sensitive protein 28 (RAD28).